The following is an 87-amino-acid chain: Co-chaperonin GroES (87 aa).

Belongs to the GroES chaperonin family. As to quaternary structure, heptamer of 7 subunits arranged in a ring. Interacts with the chaperonin GroEL.

Its subcellular location is the cytoplasm. Functionally, together with the chaperonin GroEL, plays an essential role in assisting protein folding. The GroEL-GroES system forms a nano-cage that allows encapsulation of the non-native substrate proteins and provides a physical environment optimized to promote and accelerate protein folding. GroES binds to the apical surface of the GroEL ring, thereby capping the opening of the GroEL channel. This chain is Co-chaperonin GroES, found in Campylobacter hominis (strain ATCC BAA-381 / DSM 21671 / CCUG 45161 / LMG 19568 / NCTC 13146 / CH001A).